The chain runs to 125 residues: Small ribosomal subunit protein uS12m (125 aa).

Disordered regions lie at residues 1 to 23 (MPTLNQLIRHGREEKRRTDRTRA) and 104 to 125 (LMGIPGRRSGRSKYGAEKPKSI). The span at 10–23 (HGREEKRRTDRTRA) shows a compositional bias: basic and acidic residues.

Belongs to the universal ribosomal protein uS12 family.

It is found in the mitochondrion. Its function is as follows. Protein S12 is involved in the translation initiation step. In Raphanus sativus (Radish), this protein is Small ribosomal subunit protein uS12m (RPS12).